The chain runs to 367 residues: Flagellar P-ring protein (367 aa).

A signal peptide spans 1 to 18 (MFRALITALFCFSGLALA).

The protein belongs to the FlgI family. As to quaternary structure, the basal body constitutes a major portion of the flagellar organelle and consists of four rings (L,P,S, and M) mounted on a central rod.

It localises to the periplasm. The protein localises to the bacterial flagellum basal body. Functionally, assembles around the rod to form the L-ring and probably protects the motor/basal body from shearing forces during rotation. This is Flagellar P-ring protein from Rhizorhabdus wittichii (strain DSM 6014 / CCUG 31198 / JCM 15750 / NBRC 105917 / EY 4224 / RW1) (Sphingomonas wittichii).